We begin with the raw amino-acid sequence, 372 residues long: Methylthioribose-1-phosphate isomerase (372 aa).

The Proton donor role is filled by Asp252.

The protein belongs to the eIF-2B alpha/beta/delta subunits family. MtnA subfamily.

It localises to the cytoplasm. It is found in the nucleus. The enzyme catalyses 5-(methylsulfanyl)-alpha-D-ribose 1-phosphate = 5-(methylsulfanyl)-D-ribulose 1-phosphate. It functions in the pathway amino-acid biosynthesis; L-methionine biosynthesis via salvage pathway; L-methionine from S-methyl-5-thio-alpha-D-ribose 1-phosphate: step 1/6. Its function is as follows. Catalyzes the interconversion of methylthioribose-1-phosphate (MTR-1-P) into methylthioribulose-1-phosphate (MTRu-1-P). The sequence is that of Methylthioribose-1-phosphate isomerase from Yarrowia lipolytica (strain CLIB 122 / E 150) (Yeast).